We begin with the raw amino-acid sequence, 276 residues long: Krueppel homolog 2 (276 aa).

The interval 1–37 (MSAPTDQPPRSEGAQTNSSERSSQQQEQPQQSQSQNV) is disordered. Positions 18 to 35 (SSERSSQQQEQPQQSQSQ) are enriched in low complexity. At serine 22 the chain carries Phosphoserine. 3 helical membrane-spanning segments follow: residues 53-73 (ALWA…LPIF), 125-145 (LIFF…LYSV), and 181-201 (ILKA…VLAF).

The protein belongs to the PER33/POM33 family.

Its subcellular location is the membrane. Member of the dosage-dependent hierarchy effective upon white gene expression. The sequence is that of Krueppel homolog 2 (Kr-h2) from Drosophila melanogaster (Fruit fly).